Reading from the N-terminus, the 188-residue chain is dCTP deaminase (188 aa).

Residues 111-116 (KSTYAR), 135-137 (TLE), glutamine 156, tyrosine 170, and glutamine 180 contribute to the dCTP site. Glutamate 137 (proton donor/acceptor) is an active-site residue.

This sequence belongs to the dCTP deaminase family. In terms of assembly, homotrimer.

It catalyses the reaction dCTP + H2O + H(+) = dUTP + NH4(+). Its pathway is pyrimidine metabolism; dUMP biosynthesis; dUMP from dCTP (dUTP route): step 1/2. In terms of biological role, catalyzes the deamination of dCTP to dUTP. In Francisella philomiragia subsp. philomiragia (strain ATCC 25017 / CCUG 19701 / FSC 153 / O#319-036), this protein is dCTP deaminase.